The chain runs to 101 residues: NAD(P)H-quinone oxidoreductase subunit 4L, chloroplastic (101 aa).

Transmembrane regions (helical) follow at residues 2 to 22 (MLEHVLILSAYLFSIGIYGLI), 27 to 46 (MVRALMCLELILNAVNMNLI), and 61 to 81 (IFSIFVIAIAAAEAAIGPAIV).

This sequence belongs to the complex I subunit 4L family. In terms of assembly, NDH is composed of at least 16 different subunits, 5 of which are encoded in the nucleus.

The protein resides in the plastid. It localises to the chloroplast thylakoid membrane. The enzyme catalyses a plastoquinone + NADH + (n+1) H(+)(in) = a plastoquinol + NAD(+) + n H(+)(out). It catalyses the reaction a plastoquinone + NADPH + (n+1) H(+)(in) = a plastoquinol + NADP(+) + n H(+)(out). Its function is as follows. NDH shuttles electrons from NAD(P)H:plastoquinone, via FMN and iron-sulfur (Fe-S) centers, to quinones in the photosynthetic chain and possibly in a chloroplast respiratory chain. The immediate electron acceptor for the enzyme in this species is believed to be plastoquinone. Couples the redox reaction to proton translocation, and thus conserves the redox energy in a proton gradient. The protein is NAD(P)H-quinone oxidoreductase subunit 4L, chloroplastic of Drimys granadensis.